Reading from the N-terminus, the 192-residue chain is Probable cobalt-precorrin-6B C(15)-methyltransferase (decarboxylating) (192 aa).

Residues threonine 20, 44 to 48 (GSGTG), glutamate 68, and alanine 96 contribute to the S-adenosyl-L-methionine site.

It belongs to the methyltransferase superfamily. Archaeal-type CbiT family.

The catalysed reaction is Co-precorrin-6B + S-adenosyl-L-methionine = Co-precorrin-7 + S-adenosyl-L-homocysteine + CO2. It participates in cofactor biosynthesis; adenosylcobalamin biosynthesis; cob(II)yrinate a,c-diamide from sirohydrochlorin (anaerobic route): step 8/10. Catalyzes the methylation of C-15 in cobalt-precorrin-6B followed by the decarboxylation of C-12 to form cobalt-precorrin-7. The polypeptide is Probable cobalt-precorrin-6B C(15)-methyltransferase (decarboxylating) (Sulfurisphaera tokodaii (strain DSM 16993 / JCM 10545 / NBRC 100140 / 7) (Sulfolobus tokodaii)).